We begin with the raw amino-acid sequence, 548 residues long: Membrane protein insertase YidC (548 aa).

The helical transmembrane segment at 6–26 threads the bilayer; the sequence is NLLVIALLFVSFMIWQAWEQD. The disordered stretch occupies residues 28-56; that stretch reads NPQPQTQQTTQTTTTAAGSAADQGVPASG. Residues 29–42 are compositionally biased toward low complexity; sequence PQPQTQQTTQTTTT. 4 helical membrane-spanning segments follow: residues 350–370, 424–444, 458–478, and 499–519; these read FVGN…GIMY, FPLI…MGSI, LSAQ…MFFI, and PVIF…YYIV.

The protein belongs to the OXA1/ALB3/YidC family. Type 1 subfamily. Interacts with the Sec translocase complex via SecD. Specifically interacts with transmembrane segments of nascent integral membrane proteins during membrane integration.

It is found in the cell inner membrane. In terms of biological role, required for the insertion and/or proper folding and/or complex formation of integral membrane proteins into the membrane. Involved in integration of membrane proteins that insert both dependently and independently of the Sec translocase complex, as well as at least some lipoproteins. Aids folding of multispanning membrane proteins. This chain is Membrane protein insertase YidC, found in Salmonella paratyphi C (strain RKS4594).